The chain runs to 378 residues: Ribosomal RNA large subunit methyltransferase G (378 aa).

It belongs to the methyltransferase superfamily. RlmG family.

It localises to the cytoplasm. It catalyses the reaction guanosine(1835) in 23S rRNA + S-adenosyl-L-methionine = N(2)-methylguanosine(1835) in 23S rRNA + S-adenosyl-L-homocysteine + H(+). Functionally, specifically methylates the guanine in position 1835 (m2G1835) of 23S rRNA. The protein is Ribosomal RNA large subunit methyltransferase G of Salmonella paratyphi A (strain ATCC 9150 / SARB42).